The primary structure comprises 377 residues: Erythronate-4-phosphate dehydrogenase (377 aa).

Ser-45 and Thr-67 together coordinate substrate. Residues 127 to 128 (QV), Asp-147, and Thr-176 each bind NAD(+). Arg-209 is a catalytic residue. Position 233 (Asp-233) interacts with NAD(+). Glu-238 is an active-site residue. Residue His-255 is the Proton donor of the active site. Gly-258 provides a ligand contact to NAD(+). Tyr-259 lines the substrate pocket.

The protein belongs to the D-isomer specific 2-hydroxyacid dehydrogenase family. PdxB subfamily. Homodimer.

The protein resides in the cytoplasm. The enzyme catalyses 4-phospho-D-erythronate + NAD(+) = (R)-3-hydroxy-2-oxo-4-phosphooxybutanoate + NADH + H(+). It functions in the pathway cofactor biosynthesis; pyridoxine 5'-phosphate biosynthesis; pyridoxine 5'-phosphate from D-erythrose 4-phosphate: step 2/5. Its function is as follows. Catalyzes the oxidation of erythronate-4-phosphate to 3-hydroxy-2-oxo-4-phosphonooxybutanoate. This is Erythronate-4-phosphate dehydrogenase from Vibrio atlanticus (strain LGP32) (Vibrio splendidus (strain Mel32)).